The following is a 427-amino-acid chain: Histidine--tRNA ligase (427 aa).

It belongs to the class-II aminoacyl-tRNA synthetase family. In terms of assembly, homodimer.

Its subcellular location is the cytoplasm. It carries out the reaction tRNA(His) + L-histidine + ATP = L-histidyl-tRNA(His) + AMP + diphosphate + H(+). In Lacticaseibacillus casei (strain BL23) (Lactobacillus casei), this protein is Histidine--tRNA ligase.